Here is a 2234-residue protein sequence, read N- to C-terminus: Bridge-like lipid transfer protein family member 2 (2234 aa).

Positions 1–31 are cleaved as a signal peptide; sequence MPLFLSALLVLLLVALSALFLGRWLVVRLAT. Residues 29-108 form a transmembrane domain region; sequence LATRWCQRKL…LQKVSSLSAP (80 aa). At Ser-563 the chain carries Phosphoserine. The disordered stretch occupies residues 1496–1529; that stretch reads QMSAKKPKRGIPPSAQVPPHVSTPSFSGRPDKGS. Residues 1814 to 1885 are a coiled coil; the sequence is ILHLQEAVRQ…LNILIRCFKD (72 aa). Residues Ser-1846 and Ser-2090 each carry the phosphoserine modification.

It belongs to the SABRE family.

It localises to the cell membrane. Its subcellular location is the endoplasmic reticulum membrane. It is found in the mitochondrion membrane. Tube-forming lipid transport protein which binds to phosphatidylinositols and affects phosphatidylinositol-4,5-bisphosphate (PtdIns-4,5-P2) distribution. The chain is Bridge-like lipid transfer protein family member 2 (Bltp2) from Mus musculus (Mouse).